A 995-amino-acid chain; its full sequence is UPF0182 protein NFA_45260 (995 aa).

Transmembrane regions (helical) follow at residues 18-38 (VLLV…RFTD), 63-83 (IILF…ALLL), 115-135 (FGIG…QSNW), 176-196 (FVAV…FGGL), 211-231 (IQLA…YWFD), 260-280 (KLIL…GVVL), and 288-308 (MAAA…PLVV). The disordered stretch occupies residues 904 to 957 (ATPFGGDPATRPQPGTAPPVVDSTQPPADGGTPQPQTTPPPTGSAAKDAAAAEL). Low complexity-rich tracts occupy residues 927–938 (TQPPADGGTPQP) and 946–955 (GSAAKDAAAA).

Belongs to the UPF0182 family.

Its subcellular location is the cell membrane. The sequence is that of UPF0182 protein NFA_45260 from Nocardia farcinica (strain IFM 10152).